The primary structure comprises 98 residues: Protein S100-A13 (98 aa).

The EF-hand domain occupies 18–53 (TTFFTFAGREGRKGSLSVNEFKELVTQQLPHLLKDV). Ca(2+) is bound by residues S32, E37, D64, N66, D68, E70, and E75. Residue S32 is modified to Phosphoserine.

It belongs to the S-100 family. As to quaternary structure, homodimer. Part of a copper-dependent multiprotein complex containing S100A13, FGF1 and SYT1. Interacts with FGF1 and SYT1. Interacts with IL1A.

It localises to the cytoplasm. The protein resides in the secreted. In terms of biological role, plays a role in the export of proteins that lack a signal peptide and are secreted by an alternative pathway. Binds two calcium ions per subunit. Binds one copper ion. Binding of one copper ion does not interfere with calcium binding. Required for the copper-dependent stress-induced export of IL1A and FGF1. The calcium-free protein binds to lipid vesicles containing phosphatidylserine, but not to vesicles containing phosphatidylcholine. This is Protein S100-A13 (S100A13) from Bos taurus (Bovine).